The following is a 79-amino-acid chain: MORN repeat-containing protein 2 (79 aa).

MORN repeat units lie at residues tyrosine 15–alanine 36 and tyrosine 38–aspartate 55.

The protein localises to the cytoplasmic vesicle. The protein resides in the secretory vesicle. Its subcellular location is the acrosome. It localises to the nucleus. In terms of biological role, might have a role in spermatogenesis. The polypeptide is MORN repeat-containing protein 2 (Homo sapiens (Human)).